The sequence spans 187 residues: Decorin-binding protein B (187 aa).

An N-terminal signal peptide occupies residues 1-20 (MKIGKLNSIVMVLFFDLLVA).

This sequence belongs to the decorin-binding protein family.

Its function is as follows. Binds to decorin which may mediate the adherence of B.burgdorferi to collagen fibers in skin and other tissues. This chain is Decorin-binding protein B (dbpB), found in Borreliella burgdorferi (strain N40) (Borrelia burgdorferi).